A 458-amino-acid polypeptide reads, in one-letter code: Argininosuccinate lyase (458 aa).

The protein belongs to the lyase 1 family. Argininosuccinate lyase subfamily.

It is found in the cytoplasm. The enzyme catalyses 2-(N(omega)-L-arginino)succinate = fumarate + L-arginine. It functions in the pathway amino-acid biosynthesis; L-arginine biosynthesis; L-arginine from L-ornithine and carbamoyl phosphate: step 3/3. The protein is Argininosuccinate lyase of Neisseria gonorrhoeae (strain ATCC 700825 / FA 1090).